A 315-amino-acid polypeptide reads, in one-letter code: Probable cell division protein WhiA (315 aa).

Residues 277-311 constitute a DNA-binding region (H-T-H motif); it reads SLQELGAMMPSGQISKSGVNHRLRKLNQIAEGYQQ.

This sequence belongs to the WhiA family.

Functionally, involved in cell division and chromosome segregation. The sequence is that of Probable cell division protein WhiA from Lacticaseibacillus paracasei (strain ATCC 334 / BCRC 17002 / CCUG 31169 / CIP 107868 / KCTC 3260 / NRRL B-441) (Lactobacillus paracasei).